The following is a 377-amino-acid chain: RING finger protein 215 (377 aa).

At 1–22 the chain is on the cytoplasmic side; the sequence is MGPAARPALRSPPPPPPPPPSP. The disordered stretch occupies residues 1–22; sequence MGPAARPALRSPPPPPPPPPSP. Residues 10-22 show a composition bias toward pro residues; that stretch reads RSPPPPPPPPPSP. A helical membrane pass occupies residues 23 to 43; it reads LLLLLPLLPLWLGLAGPGAAA. At 44–250 the chain is on the extracellular side; sequence DGSEPAAGAG…GGSRAQEQKP (207 aa). Residue N186 is glycosylated (N-linked (GlcNAc...) asparagine). The chain crosses the membrane as a helical span at residues 251–271; sequence LQQLWNAILLVAMLLCTGLVV. Over 272 to 377 the chain is Cytoplasmic; sequence QAQRQASRQS…NVLGNRYSDD (106 aa). The RING-type; atypical zinc finger occupies 325 to 366; it reads CAVCLDYFCNKQWLRVLPCKHEFHRDCVDPWLMLQQTCPLCK.

It is found in the membrane. The protein is RING finger protein 215 (RNF215) of Homo sapiens (Human).